A 965-amino-acid chain; its full sequence is Forespore membrane adapter protein MUG56 (965 aa).

The interval 70–175 (SFLMHKSTDE…VQNSNSTSTS (106 aa)) is disordered. The span at 82-101 (DTPSNLDSPSTQNVGSTNNT) shows a compositional bias: polar residues. The segment covering 102 to 114 (RASQSLLRRSSSF) has biased composition (low complexity). The segment covering 124 to 158 (THASTDNNPFSESSTLQPQTAERTSQQAVRSAITE) has biased composition (polar residues). Over residues 159–175 (TTNPSVSVQNSNSTSTS) the composition is skewed to low complexity. PH domains lie at 562–737 (PTPV…EVAS) and 800–961 (VIRM…KEIN).

It belongs to the SPO71 family.

Its subcellular location is the cytoplasm. It is found in the nucleus. The protein localises to the prospore membrane. In terms of biological role, may recruit a lipid transfer protein to the forespore membrane during sporulation, thereby aiding forespore membrane formation. Required for meiosis. The polypeptide is Forespore membrane adapter protein MUG56 (Schizosaccharomyces pombe (strain 972 / ATCC 24843) (Fission yeast)).